Reading from the N-terminus, the 200-residue chain is Holliday junction branch migration complex subunit RuvA (200 aa).

Residues M1–F64 form a domain I region. Positions K65–G143 are domain II. A flexible linker region spans residues G143 to M147. A domain III region spans residues P148–S200.

Belongs to the RuvA family. As to quaternary structure, homotetramer. Forms an RuvA(8)-RuvB(12)-Holliday junction (HJ) complex. HJ DNA is sandwiched between 2 RuvA tetramers; dsDNA enters through RuvA and exits via RuvB. An RuvB hexamer assembles on each DNA strand where it exits the tetramer. Each RuvB hexamer is contacted by two RuvA subunits (via domain III) on 2 adjacent RuvB subunits; this complex drives branch migration. In the full resolvosome a probable DNA-RuvA(4)-RuvB(12)-RuvC(2) complex forms which resolves the HJ.

It localises to the cytoplasm. Functionally, the RuvA-RuvB-RuvC complex processes Holliday junction (HJ) DNA during genetic recombination and DNA repair, while the RuvA-RuvB complex plays an important role in the rescue of blocked DNA replication forks via replication fork reversal (RFR). RuvA specifically binds to HJ cruciform DNA, conferring on it an open structure. The RuvB hexamer acts as an ATP-dependent pump, pulling dsDNA into and through the RuvAB complex. HJ branch migration allows RuvC to scan DNA until it finds its consensus sequence, where it cleaves and resolves the cruciform DNA. The protein is Holliday junction branch migration complex subunit RuvA of Chlorobium phaeobacteroides (strain DSM 266 / SMG 266 / 2430).